Here is a 51-residue protein sequence, read N- to C-terminus: Ovomucoid (51 aa).

Residues 3-51 enclose the Kazal-like domain; sequence VDCSGYPKPACTLEYFPLCGSDNQTYANKCAFCNAVVEKNVTLRHLGKC. Cystine bridges form between C5–C35, C13–C32, and C21–C51. Residue N42 is glycosylated (N-linked (GlcNAc...) asparagine).

Its subcellular location is the secreted. The chain is Ovomucoid from Nothoprocta cinerascens (Brushland tinamou).